A 391-amino-acid polypeptide reads, in one-letter code: Dual-specificity RNA methyltransferase RlmN (391 aa).

Positions 1–20 are disordered; sequence MTSVVADSLTETKTDSQKPI. Residues 10–20 show a composition bias toward basic and acidic residues; the sequence is TETKTDSQKPI. Glu-120 functions as the Proton acceptor in the catalytic mechanism. The Radical SAM core domain maps to 126–366; it reads DADRGTLCIS…APVRRTRGQD (241 aa). A disulfide bridge connects residues Cys-133 and Cys-371. Residues Cys-140, Cys-144, and Cys-147 each coordinate [4Fe-4S] cluster. Residues 195-196, Ser-227, 249-251, and Asn-328 contribute to the S-adenosyl-L-methionine site; these read GE and SLH. The S-methylcysteine intermediate role is filled by Cys-371.

The protein belongs to the radical SAM superfamily. RlmN family. The cofactor is [4Fe-4S] cluster.

It is found in the cytoplasm. It catalyses the reaction adenosine(2503) in 23S rRNA + 2 reduced [2Fe-2S]-[ferredoxin] + 2 S-adenosyl-L-methionine = 2-methyladenosine(2503) in 23S rRNA + 5'-deoxyadenosine + L-methionine + 2 oxidized [2Fe-2S]-[ferredoxin] + S-adenosyl-L-homocysteine. The enzyme catalyses adenosine(37) in tRNA + 2 reduced [2Fe-2S]-[ferredoxin] + 2 S-adenosyl-L-methionine = 2-methyladenosine(37) in tRNA + 5'-deoxyadenosine + L-methionine + 2 oxidized [2Fe-2S]-[ferredoxin] + S-adenosyl-L-homocysteine. In terms of biological role, specifically methylates position 2 of adenine 2503 in 23S rRNA and position 2 of adenine 37 in tRNAs. m2A2503 modification seems to play a crucial role in the proofreading step occurring at the peptidyl transferase center and thus would serve to optimize ribosomal fidelity. In Zymomonas mobilis subsp. mobilis (strain ATCC 31821 / ZM4 / CP4), this protein is Dual-specificity RNA methyltransferase RlmN.